The sequence spans 145 residues: Large ribosomal subunit protein uL15 (145 aa).

The segment covering 1-13 (MIRSKRKINKLRG) has biased composition (basic residues). Residues 1 to 44 (MIRSKRKINKLRGSRSNGGGCTKKRRGAGNKGGRGNAGASKQHW) form a disordered region.

This sequence belongs to the universal ribosomal protein uL15 family. In terms of assembly, part of the 50S ribosomal subunit.

Its function is as follows. Binds to the 23S rRNA. This is Large ribosomal subunit protein uL15 from Methanobrevibacter smithii (strain ATCC 35061 / DSM 861 / OCM 144 / PS).